Here is a 567-residue protein sequence, read N- to C-terminus: MGKDLFRYKGMKRILTLITCLTLIQTAAIIMQAEWLSEAVTGLFNGKGITSLLPVIGFFLIAFIARHGMTVARQKIVYQYAARTGADLRKSFLDQLFRLGPRFAKKEGTGQMVTLAMEGISQFRRYLELFLPKMVSMAIVPAAVVIYVFFQDRTSAIILVAAMPILIIFMILLGLVAQRKADRQWKSYQRLSNHFVDSLRGLETLRFLGLSKSHSKNIFYVSERYRKATMSTLRVAFLSSFALDFFTMLSVATVAVFLGLRLIDGDILLGPALTALILAPEYFLPVREVGNDYHATLNGQEAGKTIQEILSQPGFKEETPLQLEAWSDQDELKLSGVSVGRSVSDIHLSFKGKKKIGIIGASGAGKSTLIDILGGFLEPDGGMIEVNGTSRSHLQDGSWQKNLLYIPQHPYIFDDTLGNNIRFYHPSASAEDTTRAAASAGLTELVNNLPDGLEGRIGEGGRALSGGQAQRVALARAFLGNRPILLLDEPTAHLDIETEYEIKETMLDLFEDKLVFLATHRLHWMLDMDEIIVLDGGRVAEIGTHNELLEKNGVYTKLVKAQLGERA.

Helical transmembrane passes span 14–34 (ILTL…MQAE), 44–64 (FNGK…IAFI), 130–150 (FLPK…YVFF), 156–176 (AIIL…LGLV), 240–260 (SFAL…FLGL), and 266–286 (DILL…FLPV). One can recognise an ABC transmembrane type-1 domain in the interval 17–298 (LITCLTLIQT…VGNDYHATLN (282 aa)). The 241-residue stretch at 321-561 (LQLEAWSDQD…NGVYTKLVKA (241 aa)) folds into the ABC transporter domain. 360–367 (GASGAGKS) is an ATP binding site.

Belongs to the ABC transporter superfamily. Cysteine exporter (TC 3.A.1.129.1) family. Forms a heterodimer with CydD.

The protein localises to the cell membrane. It catalyses the reaction L-cysteine(in) + ATP + H2O = L-cysteine(out) + ADP + phosphate + H(+). The catalysed reaction is glutathione(in) + ATP + H2O = glutathione(out) + ADP + phosphate + H(+). Functionally, part of the ABC transporter complex CydDC that exports the reduced low-molecular-weight thiols cysteine and glutathione from the cell. Export of these thiol-containing redox-active molecules may be crucial for redox homeostasis, permitting correct assembly of various respiratory complexes and formation of correct disulfide bonds in secreted proteins. CydC contains transmembrane domains (TMD), which form a pore in the membrane, and an ATP-binding domain (NBD), which is responsible for energy generation. The sequence is that of Glutathione/L-cysteine transport system ATP-binding/permease protein CydC (cydC) from Bacillus subtilis (strain 168).